The following is a 721-amino-acid chain: Exocyst complex component 3-like protein 4 (721 aa).

Disordered regions lie at residues 1–52 (MPLP…SLGM) and 94–135 (GLTA…QAES). Polar residues predominate over residues 22–37 (SQTLPVTTWKSNSMKE). Phosphoserine is present on Ser-515.

This sequence belongs to the SEC6 family.

The sequence is that of Exocyst complex component 3-like protein 4 (Exoc3l4) from Mus musculus (Mouse).